Reading from the N-terminus, the 158-residue chain is Regenerating islet-derived protein 4 (158 aa).

Residues 1 to 22 form the signal peptide; that stretch reads MASRSMRLLLLLSCLAKTGVLG. An intrachain disulfide couples Cys30 to Cys41. The C-type lectin domain maps to 37–155; the sequence is HKSNCYGYFR…CNKRQHFLCK (119 aa). N-linked (GlcNAc...) asparagine glycosylation occurs at Asn50. 2 disulfides stabilise this stretch: Cys58/Cys154 and Cys129/Cys146. A carbohydrate-binding positions include 98–103 and 135–137; these read DPQKRQ and NNN.

Highly expressed in the gastrointestinal tract including the duodenum, jejunum, ileum, ileocecum, appendix, descending colon, pancreas and small intestine. Weakly expressed in normal colon and stomach. Strongly expressed in most colorectal tumors than in normal colon. Preferentially expressed in mucinous tumors and in some cases neuro-endocrine tumors. Expressed in mucus-secreting cells and enterocyte-like cells. In small intestine expressed at the basal perinuclear zone of goblet cells.

The protein resides in the secreted. In terms of biological role, calcium-independent lectin displaying mannose-binding specificity and able to maintain carbohydrate recognition activity in an acidic environment. May be involved in inflammatory and metaplastic responses of the gastrointestinal epithelium. In Homo sapiens (Human), this protein is Regenerating islet-derived protein 4 (REG4).